Here is a 462-residue protein sequence, read N- to C-terminus: Cysteine--tRNA ligase (462 aa).

Cysteine 30 lines the Zn(2+) pocket. Positions 32–42 match the 'HIGH' region motif; it reads PTVYDRAHLGN. Zn(2+) contacts are provided by cysteine 221, histidine 246, and glutamate 250. A 'KMSKS' region motif is present at residues 279-283; it reads KMSKS. Residue lysine 282 coordinates ATP.

The protein belongs to the class-I aminoacyl-tRNA synthetase family. As to quaternary structure, monomer. The cofactor is Zn(2+).

It localises to the cytoplasm. It catalyses the reaction tRNA(Cys) + L-cysteine + ATP = L-cysteinyl-tRNA(Cys) + AMP + diphosphate. The polypeptide is Cysteine--tRNA ligase (Paracoccus denitrificans (strain Pd 1222)).